Consider the following 485-residue polypeptide: NADH-quinone oxidoreductase subunit N (485 aa).

14 helical membrane passes run 8-28 (LIAL…MLSI), 35-55 (FLNA…LWFV), 71-91 (GFAM…CTFA), 105-125 (FYLL…ANHL), 127-147 (ALFL…GYAF), 159-179 (YTIL…LVYA), 203-223 (LLAG…LVPF), 235-255 (PAPV…GVVM), 271-291 (VVLG…ALSQ), 297-317 (LLGY…IALQ), 326-346 (VGVY…VVSL), 373-393 (AAVM…LGFI), 408-430 (WWLV…RVAV), and 455-475 (IVVL…QPLI).

It belongs to the complex I subunit 2 family. NDH-1 is composed of 13 different subunits. Subunits NuoA, H, J, K, L, M, N constitute the membrane sector of the complex.

Its subcellular location is the cell inner membrane. It catalyses the reaction a quinone + NADH + 5 H(+)(in) = a quinol + NAD(+) + 4 H(+)(out). Functionally, NDH-1 shuttles electrons from NADH, via FMN and iron-sulfur (Fe-S) centers, to quinones in the respiratory chain. The immediate electron acceptor for the enzyme in this species is believed to be ubiquinone. Couples the redox reaction to proton translocation (for every two electrons transferred, four hydrogen ions are translocated across the cytoplasmic membrane), and thus conserves the redox energy in a proton gradient. This is NADH-quinone oxidoreductase subunit N from Salmonella schwarzengrund (strain CVM19633).